Consider the following 164-residue polypeptide: uncharacterized protein (164 aa).

Residues 1 to 77 (MGQKKTMGTE…PCSIRDAPFH (77 aa)) form a disordered region.

This is an uncharacterized protein from Homo sapiens (Human).